The chain runs to 240 residues: MGFMELVYEGKAKAVYKTREGLLMVFKDEVTAGDGARRDKAPGKGALAAETSTLLFQYLQGRGVTTHYLMFVPPNAILVKPAQVPPLEVIVRFKAYGSYLKRMPKAKPLTPFAKPIVEFHYKDDSLHDPLILEDDVVEAGLLTAGELAAVKDMALRAASALRELYASVDCDFVDVKFEFGRVGGELVLVDEVSGDTFRLLCGGEHFDKEYYRKTGDAVGLVERYAKLLELTKLALSRQKV.

It belongs to the SAICAR synthetase family.

The enzyme catalyses 5-amino-1-(5-phospho-D-ribosyl)imidazole-4-carboxylate + L-aspartate + ATP = (2S)-2-[5-amino-1-(5-phospho-beta-D-ribosyl)imidazole-4-carboxamido]succinate + ADP + phosphate + 2 H(+). It functions in the pathway purine metabolism; IMP biosynthesis via de novo pathway; 5-amino-1-(5-phospho-D-ribosyl)imidazole-4-carboxamide from 5-amino-1-(5-phospho-D-ribosyl)imidazole-4-carboxylate: step 1/2. In Pyrobaculum calidifontis (strain DSM 21063 / JCM 11548 / VA1), this protein is Phosphoribosylaminoimidazole-succinocarboxamide synthase.